Reading from the N-terminus, the 432-residue chain is Transcriptional adapter 3 (432 aa).

A Glycyl lysine isopeptide (Lys-Gly) (interchain with G-Cter in SUMO2) cross-link involves residue Lys21. A coiled-coil region spans residues 40 to 69 (IEELDTLQLELETLLSSASRRLRVLEAETQ). Positions 87 to 126 (GRDHELGAPPKHGKPKKQKLEGKAGHGPGPGPGRPKSKNL) are disordered. A Glycyl lysine isopeptide (Lys-Gly) (interchain with G-Cter in SUMO2) cross-link involves residue Lys129. Positions 272–319 (NIISPMEDSPIPDMSGKESGADGASTSPRNQNKPFSVPHTKSLESRIK) are disordered. Ser280 and Ser298 each carry phosphoserine. Polar residues predominate over residues 295-305 (ASTSPRNQNKP). Positions 367 to 407 (LLRLAKEEVSRQELRQRVRMADNEVMDAFRKIMAARQKKRT) form a coiled coil. The residue at position 418 (Lys418) is an N6-acetyllysine.

The protein belongs to the NGG1 family. As to quaternary structure, the PCAF complex is composed of a number of TBP-associated factors (TAFS), such as TAF5, TAF5L, TAF6, TAF6L, TAF9, TAF10 and TAF12, PCAF, and also PCAF-associated factors (PAFs), such as TADA2L/ADA2, TADA3L/ADA3 and SPT3. Interacts directly with TADA2L and PCAF and also with the high-risk HPV oncoprotein E6. Component of the STAGA transcription coactivator-HAT complex, at least composed of SUPT3H, GCN5L2, TAF5L, TAF6L, SUPT7L, TADA3L, TAD1L, TAF10, TAF12, TRRAP and TAF9. Component of the TFTC-HAT complex. Component of the ADA2A-containing complex (ATAC), composed of KAT14, KAT2A, TADA2L, TADA3L, ZZ3, MBIP, WDR5, YEATS2, CCDC101 and DR1. In terms of tissue distribution, ubiquitously expressed.

It is found in the nucleus. Functions as a component of the PCAF complex. The PCAF complex is capable of efficiently acetylating histones in a nucleosomal context. The PCAF complex could be considered as the human version of the yeast SAGA complex. Also known as a coactivator for p53/TP53-dependent transcriptional activation. Component of the ATAC complex, a complex with histone acetyltransferase activity on histones H3 and H4. The chain is Transcriptional adapter 3 (TADA3) from Homo sapiens (Human).